The sequence spans 696 residues: PWWP domain-containing DNA repair factor 3B (696 aa).

Composition is skewed to polar residues over residues 119–128 (QNVPQKQSDS) and 290–300 (CLDTSQNQPSM). Disordered stretches follow at residues 119–143 (QNVPQKQSDSPPHKKYRKDEGDLPG) and 278–303 (NIEDPGEGPSNPCLDTSQNQPSMESE). Phosphoserine is present on serine 128. The PWWP domain maps to 392 to 453 (TGMIVWFKYQ…KKFDCKEKQM (62 aa)).

The protein belongs to the PWWP3A family.

In Homo sapiens (Human), this protein is PWWP domain-containing DNA repair factor 3B.